The following is a 484-amino-acid chain: Probable cytochrome P450 508A1 (484 aa).

A helical membrane pass occupies residues 1–21 (MALFEIIISLFVVYIIHNAIS). C428 is a heme binding site.

It belongs to the cytochrome P450 family. The cofactor is heme.

The protein resides in the membrane. The protein is Probable cytochrome P450 508A1 (cyp508A1-1) of Dictyostelium discoideum (Social amoeba).